A 510-amino-acid chain; its full sequence is DNA nucleotidylexotransferase (510 aa).

Residues 1–22 form a disordered region; it reads MDPLQAVHLGPRKKRPRQLGTP. The short motif at 11–17 is the Nuclear localization signal element; it reads PRKKRPR. One can recognise a BRCT domain in the interval 27–124; the sequence is PYDIRFRDLV…KPVEMMGRHQ (98 aa). A Phosphoserine modification is found at Ser-134. A mediates interaction with DNTTIP2 region spans residues 151 to 510; sequence SQYACQRRTT…DYIEPWERNA (360 aa). Residues 258–262 form an involved in DNA binding region; that stretch reads VGLKT. A 2'-deoxyribonucleoside 5'-triphosphate-binding positions include 333–338 and 342–345; these read GFRRGK and HDVD. Mg(2+) is bound by residues Asp-343, Asp-345, and Asp-434. Residue 449–450 coordinates a 2'-deoxyribonucleoside 5'-triphosphate; that stretch reads GW.

The protein belongs to the DNA polymerase type-X family. As to quaternary structure, interacts with PRP19 and DNTTIP1. Forms a ternary complex with DNTTIP2 and core histone. Released from this complex by PCNA. Interacts with TRERF1. Mg(2+) serves as cofactor. As to expression, isoform TDT-L: Expressed in the thymus, and, at lower levels, in the bone marrow. Detected in both cycling and noncycling pro-B and pre-B cells (at protein level). Isoform TDT-S: Expressed in both cycling and noncycling pro-B, but not pre-B, cells (at protein level). Not detected in mature peripheral or germinal center B cells.

Its subcellular location is the nucleus. It is found in the cytoplasm. It catalyses the reaction DNA(n) + a 2'-deoxyribonucleoside 5'-triphosphate = DNA(n+1) + diphosphate. Transferase that catalyzes the nontemplated addition of nucleoside triphosphate to coding ends during V(D)J recombination (N addition). Involved in the generation of diversity in the antigen-binding region of immunoglobulin heavy and light chains and T-cell receptors during B- and T-cell development. Does not act on double-stranded DNA with blunt ends. Its function is as follows. 3'-to-5' DNA exonuclease. Involved in the generation of diversity in the antigen-binding region of immunoglobulin heavy and light chains and T-cell receptors during B- and T-cell development. Acts on single-stranded and double-stranded DNA with 3' or 5' extensions, but not on double-stranded DNA with blunt ends. Attenuates not only isoform TDT-S-catalyzed N addition, but also P (palindromic) addition in coding joins. Lacks terminal transferase activity. The protein is DNA nucleotidylexotransferase (Dntt) of Mus musculus (Mouse).